Consider the following 549-residue polypeptide: Polynucleotide 5'-hydroxyl-kinase nol-9 (549 aa).

Gly190–Ser197 contacts ATP.

This sequence belongs to the Clp1 family. NOL9/GRC3 subfamily.

Its subcellular location is the nucleus. The protein localises to the nucleolus. Polynucleotide 5'-kinase involved in rRNA processing. This Caenorhabditis elegans protein is Polynucleotide 5'-hydroxyl-kinase nol-9 (nol-9).